We begin with the raw amino-acid sequence, 400 residues long: MEDLLKRVLKCEALQQPQWSEPSQLHDAQAYLRDSASLIRVEDILVLRATLARVAAGEAMIIQCGDCAEDMDESAADHVTRKAALLDMLAGTFRLVTQQPVVRVGRIAGQFAKPRSNHSERIGDVELPVYRGDMVNGRDAVLGHRQHDAQRLVRGYRAAQDIMQHLGWKEPSGQEQLTGSPAWTSHEMLVLDYELPQVRRDEQGRTFLGSTHWPWIGERTRQLTGAHVALLSEVLNPVACKVGPDITQDQLLSLCERLDPRREPGRLTLIARMGAHKVADRLPPLVEAVRRAGHKIIWLSDPMHGNTIVAPCGNKTRMVQTITDEITAFKHAVVSAGGVAGGLHLETTPDDVSECASDAAGLGQVGSHYKSLCDPRLNPWQAITAVMAWKACPPPSFVSL.

It belongs to the class-II DAHP synthase family.

The enzyme catalyses D-erythrose 4-phosphate + phosphoenolpyruvate + H2O = 7-phospho-2-dehydro-3-deoxy-D-arabino-heptonate + phosphate. Its pathway is antibiotic biosynthesis; phenazine biosynthesis. This Pseudomonas fluorescens protein is Probable phospho-2-dehydro-3-deoxyheptonate aldolase (phzC).